A 502-amino-acid polypeptide reads, in one-letter code: Cytochrome P450 CYP94D109 (502 aa).

The helical transmembrane segment at 3-23 (SLSLIFISFITLIVFLVVSAS) threads the bilayer. Cysteine 437 contacts heme.

This sequence belongs to the cytochrome P450 family. In terms of tissue distribution, mainly expressed in leaves and, at low levels, in roots, fruits and stems.

The protein localises to the membrane. The protein operates within steroid metabolism; cholesterol metabolism. Its function is as follows. Involved in the biosynthesis of spiroketal steroid and saponin natural products from cholesterol such as diosgenin and analogs (e.g. furostanol and spirostanol), plant defense compounds used as main precursors for the industrial production of steroid hormones. During the 5,6-spiroketalization of cholesterol, may catalyze the 27-monohydroxylation of furostanol-type steroid to an intermediate product that undergoes a stereospecific formation of the terminal heterocycle to yield diosgenin. This is Cytochrome P450 CYP94D109 from Paris polyphylla (Daiswa polyphylla).